The sequence spans 296 residues: MYGWINLDKPCGISSASAVNLVKKILNVKKVGHAGTLDPLASGVLPIAIGEATKVMPYAVDVVKSYLFTVQWGEQRTTDDIEGKIVAKSDIVPSSEDIKKAIPNFIGLLRQVPPNFSAVHVNGVRAFKLARNGQDVSLTSRDVNVLKLKLLSADQENNKADFYLLCKKGVYVRSIARDLGIELGCLGYVRKLQRVRVGCFRKKNAITLEMLKMLYNNSRKCSYLLPLWYVLQDMKHLNDVFSDIQIKKIKNGQNIELNNLYVVRNCGICYVSTGNVPVAICSIVNSVVRPVRIFNV.

Catalysis depends on Asp-38, which acts as the Nucleophile.

The protein belongs to the pseudouridine synthase TruB family. Type 1 subfamily.

The enzyme catalyses uridine(55) in tRNA = pseudouridine(55) in tRNA. In terms of biological role, responsible for synthesis of pseudouridine from uracil-55 in the psi GC loop of transfer RNAs. This Ehrlichia chaffeensis (strain ATCC CRL-10679 / Arkansas) protein is tRNA pseudouridine synthase B.